A 318-amino-acid polypeptide reads, in one-letter code: L-lactate dehydrogenase (318 aa).

Residues V18, D39, K44, Y69, and 83–84 (GA) each bind NAD(+). Residues Q86 and R92 each coordinate substrate. NAD(+)-binding positions include S105, 122-124 (VSN), and S147. 124-127 (NPVD) contacts substrate. 152 to 155 (DTSR) serves as a coordination point for substrate. Residue H179 is the Proton acceptor of the active site. Residue Y225 is modified to Phosphotyrosine. Substrate is bound at residue T234.

The protein belongs to the LDH/MDH superfamily. LDH family. As to quaternary structure, homotetramer.

It localises to the cytoplasm. The enzyme catalyses (S)-lactate + NAD(+) = pyruvate + NADH + H(+). It participates in fermentation; pyruvate fermentation to lactate; (S)-lactate from pyruvate: step 1/1. Its function is as follows. Catalyzes the conversion of lactate to pyruvate. The polypeptide is L-lactate dehydrogenase (Clostridium botulinum (strain ATCC 19397 / Type A)).